A 67-amino-acid chain; its full sequence is DNA-directed RNA polymerase subunit omega (67 aa).

It belongs to the RNA polymerase subunit omega family. As to quaternary structure, the RNAP catalytic core consists of 2 alpha, 1 beta, 1 beta' and 1 omega subunit. When a sigma factor is associated with the core the holoenzyme is formed, which can initiate transcription.

It catalyses the reaction RNA(n) + a ribonucleoside 5'-triphosphate = RNA(n+1) + diphosphate. In terms of biological role, promotes RNA polymerase assembly. Latches the N- and C-terminal regions of the beta' subunit thereby facilitating its interaction with the beta and alpha subunits. The protein is DNA-directed RNA polymerase subunit omega of Bordetella avium (strain 197N).